We begin with the raw amino-acid sequence, 163 residues long: Nucleotide-binding protein BcerKBAB4_1061 (163 aa).

Belongs to the YajQ family.

In terms of biological role, nucleotide-binding protein. This is Nucleotide-binding protein BcerKBAB4_1061 from Bacillus mycoides (strain KBAB4) (Bacillus weihenstephanensis).